The chain runs to 34 residues: Photosystem II reaction center protein M (34 aa).

A helical transmembrane segment spans residues 6 to 26; it reads LGAIATALFVFIPCVFLILLY.

Belongs to the PsbM family. PSII is composed of 1 copy each of membrane proteins PsbA, PsbB, PsbC, PsbD, PsbE, PsbF, PsbH, PsbI, PsbJ, PsbK, PsbL, PsbM, PsbT, PsbX, PsbY, PsbZ, Psb30/Ycf12, peripheral proteins PsbO, CyanoQ (PsbQ), PsbU, PsbV and a large number of cofactors. It forms dimeric complexes.

The protein resides in the cellular thylakoid membrane. One of the components of the core complex of photosystem II (PSII). PSII is a light-driven water:plastoquinone oxidoreductase that uses light energy to abstract electrons from H(2)O, generating O(2) and a proton gradient subsequently used for ATP formation. It consists of a core antenna complex that captures photons, and an electron transfer chain that converts photonic excitation into a charge separation. This subunit is found at the monomer-monomer interface. This chain is Photosystem II reaction center protein M, found in Acaryochloris marina (strain MBIC 11017).